We begin with the raw amino-acid sequence, 99 residues long: Malonate decarboxylase acyl carrier protein (99 aa).

At Ser-25 the chain carries O-(phosphoribosyl dephospho-coenzyme A)serine.

This sequence belongs to the MdcC family. In terms of processing, covalently binds the prosthetic group of malonate decarboxylase.

The protein localises to the cytoplasm. Functionally, subunit of malonate decarboxylase, it is an acyl carrier protein to which acetyl and malonyl thioester residues are bound via a 2'-(5''-phosphoribosyl)-3'-dephospho-CoA prosthetic group and turn over during the catalytic mechanism. The polypeptide is Malonate decarboxylase acyl carrier protein (Pseudomonas aeruginosa (strain UCBPP-PA14)).